Consider the following 844-residue polypeptide: Lysine-specific histone demethylase 1 homolog 1 (844 aa).

A compositionally biased stretch (basic and acidic residues) spans M1–G18. The tract at residues M1–R131 is disordered. The span at P26 to N40 shows a compositional bias: acidic residues. Polar residues-rich tracts occupy residues A46–Q62 and D107–N118. Positions G154–A255 constitute an SWIRM domain. Positions 295, 297, and 303 each coordinate FAD. Residues L516 to F523 carry the Nuclear localization signal motif. Position 679 (E679) interacts with FAD.

This sequence belongs to the flavin monoamine oxidase family. As to quaternary structure, interacts with CZS. Interacts with OTU6/OTLD1. FAD serves as cofactor. In terms of tissue distribution, expressed in the shoot and root apical regions of young seedlings. Expressed in cotyledons and inflorescences.

It is found in the nucleus. It localises to the cytoplasm. In terms of biological role, probable histone demethylase that reduces the levels of histone H3 'Lys-4' methylation in chromatin of the floral repressor FLOWERING LOCUS C (FLC) and the sporophytically silenced floral repressor FWA. Seems to act in partial redundancy with FLOWERING LOCUS D (FLD) to repress FLC expression. Required for cytosine methylation of FWA. Controls primary seed dormancy by regulating DOG1 and abscisic acid signaling-related genes. In association with OTU6/OTLD1, involved in transcriptional gene repression via histone deubiquitination and demethylation. This is Lysine-specific histone demethylase 1 homolog 1 from Arabidopsis thaliana (Mouse-ear cress).